A 262-amino-acid polypeptide reads, in one-letter code: Putative hydro-lyase cu1581 (262 aa).

The protein belongs to the D-glutamate cyclase family.

The sequence is that of Putative hydro-lyase cu1581 from Corynebacterium urealyticum (strain ATCC 43042 / DSM 7109).